We begin with the raw amino-acid sequence, 592 residues long: MHKIFIIFGLLSLCAAHSLRDLSNKDEEDPPSSAPGVRKRRMMSEEDQKTVDYYMDKLNKLADEKHPEEIERHKNPELVAWDRKRDSVLNPEEQGKFFQGDIVLYPEQAKALYEQALTEGKTRVKRKFIGSNLRRWDASRPIIYAFDGSHTQREQRIIELALEHWHNITCLNFQRNDQANSGNRIVFTDVDGCASNVGRHPLGEEQLVSLAPECIRLGVIAHEVAHALGFWHEQSRPDRDQYVTVRWENIDKDSKGQFLKEDPDDVDNAGVPYDYGSIMHYRSKAFSKFDDLYTISTYVTDYQKTIGQRDQLSFNDIRLMNKIYCSAVCPSKLPCQRGGYTDPRRCDRCRCPDGFTGQYCEQVMPGYGATCGGKISLTRSTTRISSPGYPREFKEGQECSWLLVAPPGHIVEFQFIGEFEMYCKIRHSLCMDYVEVRNSTDFANTGMRYCCYGTPPTRIRSATTDMVVLFRSFYRGGKGFEARARAVPEAGNWNSWSPWTACSATCGACGSRMRTRTCPPGNACSGEPVETQICNTQACTGMCAQKREEEGQCGGFLSLLRGVRCRQEKTVMAPCENACCPGFTLQRGRCVR.

The N-terminal stretch at 1 to 18 (MHKIFIIFGLLSLCAAHS) is a signal peptide. Positions 19–127 (LRDLSNKDEE…TEGKTRVKRK (109 aa)) are excised as a propeptide. The tract at residues 22-46 (LSNKDEEDPPSSAPGVRKRRMMSEE) is disordered. Positions 127 to 326 (KFIGSNLRRW…IRLMNKIYCS (200 aa)) constitute a Peptidase M12A domain. N167 is a glycosylation site (N-linked (GlcNAc...) asparagine). Intrachain disulfides connect C170–C325 and C193–C214. H222 lines the Zn(2+) pocket. E223 is an active-site residue. Zn(2+) contacts are provided by H226 and H232. Residues 349–361 (CRCPDGFTGQYCE) form the EGF-like domain. C371 and C399 are joined by a disulfide. The region spanning 371–487 (CGGKISLTRS…KGFEARARAV (117 aa)) is the CUB domain. A glycan (N-linked (GlcNAc...) asparagine) is linked at N438. In terms of domain architecture, TSP type-1 spans 490–540 (AGNWNSWSPWTACSATCGACGSRMRTRTCPPGNACSGEPVETQICNTQACT). Disulfide bonds link C502–C534, C506–C539, and C518–C524.

The cofactor is Zn(2+). As to expression, expressed in hypodermis, rectal and vulval epithelial cells and amphid socket cells.

It localises to the secreted. Its function is as follows. Metalloprotease which cleaves the carboxyl terminus of procollagens, such as sqt-3, to mature collagens. Involved in cuticular collagen maturation. In Caenorhabditis elegans, this protein is Zinc metalloproteinase dpy-31.